The sequence spans 633 residues: DNA mismatch repair protein MutL (633 aa).

It belongs to the DNA mismatch repair MutL/HexB family.

Functionally, this protein is involved in the repair of mismatches in DNA. It is required for dam-dependent methyl-directed DNA mismatch repair. May act as a 'molecular matchmaker', a protein that promotes the formation of a stable complex between two or more DNA-binding proteins in an ATP-dependent manner without itself being part of a final effector complex. The polypeptide is DNA mismatch repair protein MutL (Pseudomonas putida (strain W619)).